Consider the following 284-residue polypeptide: 4-diphosphocytidyl-2-C-methyl-D-erythritol kinase (284 aa).

The active site involves Lys-14. Residue 98–108 (PMGGGLGGGSS) participates in ATP binding. Asp-140 is a catalytic residue.

This sequence belongs to the GHMP kinase family. IspE subfamily.

The catalysed reaction is 4-CDP-2-C-methyl-D-erythritol + ATP = 4-CDP-2-C-methyl-D-erythritol 2-phosphate + ADP + H(+). The protein operates within isoprenoid biosynthesis; isopentenyl diphosphate biosynthesis via DXP pathway; isopentenyl diphosphate from 1-deoxy-D-xylulose 5-phosphate: step 3/6. In terms of biological role, catalyzes the phosphorylation of the position 2 hydroxy group of 4-diphosphocytidyl-2C-methyl-D-erythritol. The chain is 4-diphosphocytidyl-2-C-methyl-D-erythritol kinase from Shewanella halifaxensis (strain HAW-EB4).